We begin with the raw amino-acid sequence, 440 residues long: 5-hydroxytryptamine receptor 6 (440 aa).

The Extracellular portion of the chain corresponds to 1-27; that stretch reads MVPEPGPSANSTPAWGAGPPSAPGGSG. The chain crosses the membrane as a helical span at residues 28 to 52; sequence WVAAALCVVIALTAAANSLLIALIC. Topologically, residues 53–62 are cytoplasmic; sequence TQPALRNTSN. Residues 63-88 traverse the membrane as a helical segment; that stretch reads FFLVSLFTSDLMVGLVVMPPAMLNAL. The Extracellular portion of the chain corresponds to 89–96; the sequence is YGRWVLAR. Residues 97 to 122 traverse the membrane as a helical segment; sequence GLCLLWTAFDVMCCSASILNLCLISL. The cysteines at positions 99 and 180 are disulfide-linked. Residue D106 participates in serotonin binding. Residues 123-142 lie on the Cytoplasmic side of the membrane; sequence DRYLLILSPLRYKLRMTPPR. A helical membrane pass occupies residues 143 to 167; the sequence is ALALVLGAWSLAALASFLPLLLGWH. Over 168–185 the chain is Extracellular; it reads ELGHARPPVPGQCRLLAS. The helical transmembrane segment at 186–209 threads the bilayer; the sequence is LPFVLVASGLTFFLPSGAICFTYC. Over 210-266 the chain is Cytoplasmic; sequence RILLAARKQAVQVASLTTGMASQASETLQVPRTPRPGVESADSRRLATKHSRKALKA. A helical transmembrane segment spans residues 267–293; the sequence is SLTLGILLGMFFVTWLPFFVANIVQAV. Residue N288 coordinates serotonin. Over 294–299 the chain is Extracellular; that stretch reads CDCISP. The chain crosses the membrane as a helical span at residues 300–323; it reads GLFDVLTWLGYCNSTMNPIIYPLF. Residues 324 to 440 lie on the Cytoplasmic side of the membrane; that stretch reads MRDFKRALGR…RPHPLGIPTN (117 aa). The segment at 346–392 is disordered; it reads ASLASPSLRTSHSGPRPGLSLQQVLPLPLPPDSDSDSDAGSGGSSGL. Over residues 347–358 the composition is skewed to polar residues; that stretch reads SLASPSLRTSHS. Positions 362 to 371 are enriched in low complexity; that stretch reads PGLSLQQVLP.

The protein belongs to the G-protein coupled receptor 1 family. In terms of assembly, interacts with MTOR, RPTOR and NF1. Interacts with CDK5.

The protein resides in the cell membrane. G-protein coupled receptor for 5-hydroxytryptamine (serotonin), a biogenic hormone that functions as a neurotransmitter, a hormone and a mitogen. Also has a high affinity for tricyclic psychotropic drugs. Ligand binding causes a conformation change that triggers signaling via guanine nucleotide-binding proteins (G proteins) and modulates the activity of downstream effectors. HTR6 is coupled to G(s) G alpha proteins and mediates activation of adenylate cyclase activity. Controls pyramidal neurons migration during corticogenesis, through the regulation of CDK5 activity. Is an activator of mTOR signaling. The polypeptide is 5-hydroxytryptamine receptor 6 (HTR6) (Pan troglodytes (Chimpanzee)).